The chain runs to 188 residues: MLVHPEAMSVGALADKIRKIENWPQKGILFHDITPVLQSAEYFRLLVDLLVYRYMDQKIDIVAGLDARGFIIGAALAYQLNVGFVPIRKKGKLPFETVSQSYALEYGEAAVEIHTDAVKLGSRVLLVDDLIATGGTMLAGLELIRKLGGEIVEAAAILEFTDLQGGKNIRASGAPLFTLLQNEGCMKG.

It belongs to the purine/pyrimidine phosphoribosyltransferase family. Homodimer.

Its subcellular location is the cytoplasm. It catalyses the reaction AMP + diphosphate = 5-phospho-alpha-D-ribose 1-diphosphate + adenine. Its pathway is purine metabolism; AMP biosynthesis via salvage pathway; AMP from adenine: step 1/1. Functionally, catalyzes a salvage reaction resulting in the formation of AMP, that is energically less costly than de novo synthesis. This is Adenine phosphoribosyltransferase from Neisseria meningitidis serogroup B (strain ATCC BAA-335 / MC58).